The following is a 171-amino-acid chain: Large ribosomal subunit protein uL10 (171 aa).

The protein belongs to the universal ribosomal protein uL10 family. As to quaternary structure, part of the ribosomal stalk of the 50S ribosomal subunit. The N-terminus interacts with L11 and the large rRNA to form the base of the stalk. The C-terminus forms an elongated spine to which L12 dimers bind in a sequential fashion forming a multimeric L10(L12)X complex.

Functionally, forms part of the ribosomal stalk, playing a central role in the interaction of the ribosome with GTP-bound translation factors. This is Large ribosomal subunit protein uL10 from Sphingopyxis alaskensis (strain DSM 13593 / LMG 18877 / RB2256) (Sphingomonas alaskensis).